The following is a 740-amino-acid chain: Rho GTPase-activating protein 92B (740 aa).

Residues Glu-13–Lys-246 enclose the BAR domain. Positions Leu-49 to Ser-74 are disordered. Positions Thr-251–Phe-448 constitute a Rho-GAP domain. Residues Gly-467–Asp-740 form a disordered region. Phosphoserine is present on residues Ser-469 and Ser-473. A compositionally biased stretch (polar residues) spans Thr-506–Ser-520. Pro residues predominate over residues Pro-566 to Pro-577. Ser-593 bears the Phosphoserine mark. Position 595 is a phosphothreonine (Thr-595). The segment covering Thr-643–Gly-655 has biased composition (polar residues). The span at Phe-659–Asn-672 shows a compositional bias: basic and acidic residues. Polar residues predominate over residues Gly-673–Lys-686. Over residues Pro-694–Pro-713 the composition is skewed to low complexity. Residue Ser-715 is modified to Phosphoserine. Thr-721 is modified (phosphothreonine). Over residues Pro-725–Thr-734 the composition is skewed to pro residues. 2 positions are modified to phosphoserine: Ser-738 and Ser-739.

Functionally, GTPase activator for the Rho-type GTPases by converting them to an inactive GDP-bound state. The sequence is that of Rho GTPase-activating protein 92B (RhoGAP92B) from Drosophila melanogaster (Fruit fly).